Consider the following 383-residue polypeptide: Retrovirus-related Pol polyprotein from type-1 retrotransposable element R1 3 (383 aa).

Residues 1-88 (VDAFADDLLL…DRVRYLGVNV (88 aa)) form the Reverse transcriptase domain. The nucleic acid-binding endonuclease stretch occupies residues 229 to 383 (LSLHECRELV…VQRMRENEES (155 aa)).

It catalyses the reaction DNA(n) + a 2'-deoxyribonucleoside 5'-triphosphate = DNA(n+1) + diphosphate. This Nasonia vitripennis (Parasitic wasp) protein is Retrovirus-related Pol polyprotein from type-1 retrotransposable element R1 3.